The primary structure comprises 43 residues: Subtilosin-A (43 aa).

A propeptide spanning residues 1–8 (MKKAVIVE) is cleaved from the precursor. A cross-link (cyclopeptide (Asn-Gly)) is located at residues 9–43 (NKGCATCSIGAACLVDGPIPDFEIAGATGLFGLWG). A cross-link (2-cysteinyl-D-phenylalanine (Cys-Phe)) is located at residues 12–39 (CATCSIGAACLVDGPIPDFEIAGATGLF). The segment at residues 15 to 36 (CSIGAACLVDGPIPDFEIAGAT) is a cross-link (2-cysteinyl-D-allo-threonine (Cys-Thr)). A cross-link (2-cysteinyl-L-phenylalanine (Cys-Phe)) is located at residues 21–30 (CLVDGPIPDF).

The protein belongs to the bacteriocin class V family. Post-translationally, this sactipeptide undergoes unique processing steps that include proteolytic cleavage after Glu-8, and covalent linkage of the alpha-amino of Asn-9 with the carboxyl of Gly-43 to form a cyclopeptide. Thioether cross-links are formed between cysteines and the alpha-carbons of other amino acids, Cys-12 to Phe-39, Cys-15 to Thr-36, and Cys-21 to Phe-30. In forming these cross-links, Thr-36 and Phe-39 are converted to D-amino acids. Propeptide cleavage and cyclopeptide formation only occur after all 3 thioether cross-links are formed.

The protein localises to the secreted. Functionally, has bacteriocidal activity against some Gram-positive bacteria such as Listeria, some species of Bacillus and E.faecium. A single mutation (Thr-14-Ile) confers hemolytic activity against rabbit and human blood. This is Subtilosin-A (sboA) from Bacillus subtilis (strain 168).